Here is a 524-residue protein sequence, read N- to C-terminus: N-acetylgalactosamine-6-sulfatase (524 aa).

Positions 1 to 27 (MTACSTAIRAQQLLLPVLSALGLLAAG) are cleaved as a signal peptide. A catalytic domain region spans residues 28–381 (APQPPNIVLL…PTMLQGHIID (354 aa)). Positions 40, 41, and 80 each coordinate Ca(2+). Residue Cys-80 is the Nucleophile of the active site. Residue Cys-80 is modified to 3-oxoalanine (Cys). Residue His-143 is part of the active site. The N-linked (GlcNAc...) asparagine glycan is linked to Asn-205. The Ca(2+) site is built by Asp-290 and Asn-291. A disulfide bridge links Cys-310 with Cys-421. Asn-425 is a glycosylation site (N-linked (GlcNAc...) asparagine). 2 disulfide bridges follow: Cys-491-Cys-520 and Cys-503-Cys-509.

It belongs to the sulfatase family. In terms of assembly, homodimer. Requires Ca(2+) as cofactor. Post-translationally, the conversion to 3-oxoalanine (also known as C-formylglycine, FGly), of a serine or cysteine residue in prokaryotes and of a cysteine residue in eukaryotes, is critical for catalytic activity.

It localises to the lysosome. The enzyme catalyses Hydrolysis of the 6-sulfate groups of the N-acetyl-D-galactosamine 6-sulfate units of chondroitin sulfate and of the D-galactose 6-sulfate units of keratan sulfate.. The sequence is that of N-acetylgalactosamine-6-sulfatase (Galns) from Rattus norvegicus (Rat).